The primary structure comprises 433 residues: Trigger factor (433 aa).

In terms of domain architecture, PPIase FKBP-type spans 163-248; it reads GNFVVIDFVG…VKEAKVKELP (86 aa).

Belongs to the FKBP-type PPIase family. Tig subfamily.

The protein resides in the cytoplasm. The catalysed reaction is [protein]-peptidylproline (omega=180) = [protein]-peptidylproline (omega=0). Functionally, involved in protein export. Acts as a chaperone by maintaining the newly synthesized protein in an open conformation. Functions as a peptidyl-prolyl cis-trans isomerase. This Geobacter metallireducens (strain ATCC 53774 / DSM 7210 / GS-15) protein is Trigger factor.